Reading from the N-terminus, the 768-residue chain is MSSPAYDVIAALKQEGLKPSDWQEICRRLGREPNRAELGMFGVMWSEHCCYRNSRPLLRGFPTEGPRILVGPGENAGVVDLGEGHRLAFKIESHNHPSAVEPFQGAATGVGGILRDIFTMGARPIALLNALRFGPLEDPVNVGLIEGVVAGIAHYGNCVGVPTVGGEVAFDPSYGGNPLVNAMALGLMETEEIVKSGAQGVGNPVVYVGSTTGRDGMGGASFASAELSADSLDDRPAVQVGDPFLEKGLIEACLEAFSGGDVVAAQDMGAAGLTCSCSEMAAKGGLGVELDLDRVPAREEGMTAYEFLLSESQERMLFVVKAGREEALMQRFRRWGLQAAVVGQVLQEPLVRVLHHGEVAAEVPATALADDTPIEQHELLQEPPADLQELWQWQESQLPALDDPASVLLTLLDDPTIASKRWVHRQYDQQVLANTVVSSGAADAAVVRLRPQQGQGSMESVQRGVAATVDCPNRWVALDPERGAQAAVAEAARNLSCVGAEPLAITDNLNFPSPETPKGYWQLAMACRGIAEACRALNTPVTGGNVSLYNETRRDDGTLQPIHPTPVVGMVGLVENIERVVGLGWRQPGDAVLLLGVAPDEQGDDRLGLAGSSYQMLVSGVLAGRPPRVDFELERGVQQLLRQAIDAGLLASAHDSSDGGLAVALAESSIASSLGVELKLNGRPEGLTRTLFAEGGARVAISVKAECRPQWDQLAAESTVPITELGVVNDGSTFRIHCGEKDVQWSLADLKRAHQEGLPRRIGGEAES.

H48 is an active-site residue. The ATP site is built by Y51 and K90. Residue E92 participates in Mg(2+) binding. Substrate contacts are provided by residues 93–96 and R115; that span reads SHNH. H94 functions as the Proton acceptor in the catalytic mechanism. Residue D116 coordinates Mg(2+). Q239 contributes to the substrate binding site. A Mg(2+)-binding site is contributed by D267. 311–313 contacts substrate; the sequence is ESQ. The ATP site is built by D507 and G544. N545 contacts Mg(2+). S547 serves as a coordination point for substrate.

The protein belongs to the FGAMS family. In terms of assembly, monomer. Part of the FGAM synthase complex composed of 1 PurL, 1 PurQ and 2 PurS subunits.

The protein localises to the cytoplasm. It catalyses the reaction N(2)-formyl-N(1)-(5-phospho-beta-D-ribosyl)glycinamide + L-glutamine + ATP + H2O = 2-formamido-N(1)-(5-O-phospho-beta-D-ribosyl)acetamidine + L-glutamate + ADP + phosphate + H(+). Its pathway is purine metabolism; IMP biosynthesis via de novo pathway; 5-amino-1-(5-phospho-D-ribosyl)imidazole from N(2)-formyl-N(1)-(5-phospho-D-ribosyl)glycinamide: step 1/2. Its function is as follows. Part of the phosphoribosylformylglycinamidine synthase complex involved in the purines biosynthetic pathway. Catalyzes the ATP-dependent conversion of formylglycinamide ribonucleotide (FGAR) and glutamine to yield formylglycinamidine ribonucleotide (FGAM) and glutamate. The FGAM synthase complex is composed of three subunits. PurQ produces an ammonia molecule by converting glutamine to glutamate. PurL transfers the ammonia molecule to FGAR to form FGAM in an ATP-dependent manner. PurS interacts with PurQ and PurL and is thought to assist in the transfer of the ammonia molecule from PurQ to PurL. In Parasynechococcus marenigrum (strain WH8102), this protein is Phosphoribosylformylglycinamidine synthase subunit PurL.